Consider the following 105-residue polypeptide: Large ribosomal subunit protein bL21 (105 aa).

This sequence belongs to the bacterial ribosomal protein bL21 family. As to quaternary structure, part of the 50S ribosomal subunit. Contacts protein L20.

Functionally, this protein binds to 23S rRNA in the presence of protein L20. This Desulfatibacillum aliphaticivorans protein is Large ribosomal subunit protein bL21.